A 496-amino-acid polypeptide reads, in one-letter code: Glycerol kinase (496 aa).

Threonine 11 is a binding site for ADP. Positions 11, 12, and 13 each coordinate ATP. Threonine 11 contacts sn-glycerol 3-phosphate. ADP is bound at residue arginine 15. Residues arginine 81, glutamate 82, tyrosine 133, and aspartate 242 each contribute to the sn-glycerol 3-phosphate site. Glycerol is bound by residues arginine 81, glutamate 82, tyrosine 133, aspartate 242, and glutamine 243. Residues threonine 264 and glycine 307 each contribute to the ADP site. The ATP site is built by threonine 264, glycine 307, and glutamine 311. An ADP-binding site is contributed by asparagine 413.

Belongs to the FGGY kinase family.

The catalysed reaction is glycerol + ATP = sn-glycerol 3-phosphate + ADP + H(+). Its pathway is polyol metabolism; glycerol degradation via glycerol kinase pathway; sn-glycerol 3-phosphate from glycerol: step 1/1. Its activity is regulated as follows. Inhibited by fructose 1,6-bisphosphate (FBP). Key enzyme in the regulation of glycerol uptake and metabolism. Catalyzes the phosphorylation of glycerol to yield sn-glycerol 3-phosphate. The protein is Glycerol kinase of Borrelia duttonii (strain Ly).